A 439-amino-acid chain; its full sequence is GTPase Obg (439 aa).

The Obg domain maps to 5–164 (TDFFDQATIV…LTLELELKML (160 aa)). Residues 165-335 (ADVGLVGFPN…LLRRVADLLR (171 aa)) enclose the OBG-type G domain. Residues 171 to 178 (GFPNAGKS), 196 to 200 (FTTLT), 217 to 220 (DIPG), 287 to 290 (NKAD), and 316 to 318 (SAA) each bind GTP. Mg(2+) is bound by residues Ser-178 and Thr-198. The region spanning 356–433 (LPEVDENAFT…IGRAELVWDD (78 aa)) is the OCT domain.

This sequence belongs to the TRAFAC class OBG-HflX-like GTPase superfamily. OBG GTPase family. In terms of assembly, monomer. The cofactor is Mg(2+).

Its subcellular location is the cytoplasm. An essential GTPase which binds GTP, GDP and possibly (p)ppGpp with moderate affinity, with high nucleotide exchange rates and a fairly low GTP hydrolysis rate. Plays a role in control of the cell cycle, stress response, ribosome biogenesis and in those bacteria that undergo differentiation, in morphogenesis control. This chain is GTPase Obg, found in Chloroflexus aurantiacus (strain ATCC 29364 / DSM 637 / Y-400-fl).